The chain runs to 148 residues: SsrA-binding protein (148 aa).

The span at 127 to 142 (KRESEKERDWERDKAR) shows a compositional bias: basic and acidic residues. Residues 127-148 (KRESEKERDWERDKARLMRVKT) form a disordered region.

Belongs to the SmpB family.

It is found in the cytoplasm. In terms of biological role, required for rescue of stalled ribosomes mediated by trans-translation. Binds to transfer-messenger RNA (tmRNA), required for stable association of tmRNA with ribosomes. tmRNA and SmpB together mimic tRNA shape, replacing the anticodon stem-loop with SmpB. tmRNA is encoded by the ssrA gene; the 2 termini fold to resemble tRNA(Ala) and it encodes a 'tag peptide', a short internal open reading frame. During trans-translation Ala-aminoacylated tmRNA acts like a tRNA, entering the A-site of stalled ribosomes, displacing the stalled mRNA. The ribosome then switches to translate the ORF on the tmRNA; the nascent peptide is terminated with the 'tag peptide' encoded by the tmRNA and targeted for degradation. The ribosome is freed to recommence translation, which seems to be the essential function of trans-translation. The sequence is that of SsrA-binding protein from Aromatoleum aromaticum (strain DSM 19018 / LMG 30748 / EbN1) (Azoarcus sp. (strain EbN1)).